The following is a 200-amino-acid chain: Peptidyl-tRNA hydrolase (200 aa).

Tyrosine 16 lines the tRNA pocket. Histidine 21 acts as the Proton acceptor in catalysis. The tRNA site is built by phenylalanine 67, asparagine 69, and asparagine 115.

Belongs to the PTH family. In terms of assembly, monomer.

The protein resides in the cytoplasm. The enzyme catalyses an N-acyl-L-alpha-aminoacyl-tRNA + H2O = an N-acyl-L-amino acid + a tRNA + H(+). Functionally, hydrolyzes ribosome-free peptidyl-tRNAs (with 1 or more amino acids incorporated), which drop off the ribosome during protein synthesis, or as a result of ribosome stalling. Catalyzes the release of premature peptidyl moieties from peptidyl-tRNA molecules trapped in stalled 50S ribosomal subunits, and thus maintains levels of free tRNAs and 50S ribosomes. This chain is Peptidyl-tRNA hydrolase, found in Prochlorococcus marinus (strain MIT 9312).